The sequence spans 316 residues: Probable cell division protein WhiA (316 aa).

A DNA-binding region (H-T-H motif) is located at residues 275–309 (TLKELGEMVSGGKISKSGINHRLRKIDEIAEKLRA).

This sequence belongs to the WhiA family.

Functionally, involved in cell division and chromosome segregation. This is Probable cell division protein WhiA from Bacillus cereus (strain B4264).